The chain runs to 174 residues: RNA pyrophosphohydrolase (174 aa).

One can recognise a Nudix hydrolase domain in the interval 6 to 149; sequence GYRPNVGIIL…KRDVYLGALK (144 aa). The Nudix box signature appears at 38 to 59; the sequence is GGIKPGESPETAMYRELYEEVG.

This sequence belongs to the Nudix hydrolase family. RppH subfamily. A divalent metal cation serves as cofactor.

Its function is as follows. Accelerates the degradation of transcripts by removing pyrophosphate from the 5'-end of triphosphorylated RNA, leading to a more labile monophosphorylated state that can stimulate subsequent ribonuclease cleavage. This chain is RNA pyrophosphohydrolase, found in Neisseria meningitidis serogroup A / serotype 4A (strain DSM 15465 / Z2491).